The following is a 526-amino-acid chain: Exodeoxyribonuclease 7 large subunit (526 aa).

The segment at 499–526 (AGEDGTPSQAPKKRPARAGEPTKQGSLF) is disordered.

It belongs to the XseA family. As to quaternary structure, heterooligomer composed of large and small subunits.

The protein localises to the cytoplasm. It carries out the reaction Exonucleolytic cleavage in either 5'- to 3'- or 3'- to 5'-direction to yield nucleoside 5'-phosphates.. Bidirectionally degrades single-stranded DNA into large acid-insoluble oligonucleotides, which are then degraded further into small acid-soluble oligonucleotides. The chain is Exodeoxyribonuclease 7 large subunit from Sinorhizobium medicae (strain WSM419) (Ensifer medicae).